The following is an 897-amino-acid chain: 3'-5' exonuclease DinG (897 aa).

The Exonuclease domain occupies Val-8 to Leu-161. The region spanning Ser-241–Arg-496 is the Helicase ATP-binding domain. Ala-276 to Ser-283 contributes to the ATP binding site. A DEAH box motif is present at residues Asp-448–His-451. A Helicase C-terminal domain is found at Asn-703 to Gln-893.

This sequence belongs to the helicase family. DinG subfamily. Type 2 sub-subfamily.

3'-5' exonuclease. The chain is 3'-5' exonuclease DinG from Staphylococcus aureus (strain MSSA476).